A 119-amino-acid polypeptide reads, in one-letter code: Large ribosomal subunit protein bL20 (119 aa).

It belongs to the bacterial ribosomal protein bL20 family.

Its function is as follows. Binds directly to 23S ribosomal RNA and is necessary for the in vitro assembly process of the 50S ribosomal subunit. It is not involved in the protein synthesizing functions of that subunit. This is Large ribosomal subunit protein bL20 from Rhodopseudomonas palustris (strain BisB5).